The primary structure comprises 102 residues: MKVLENVNVALKANVYFDGKVTSRAIYVGGQKQTIGVVLPGEYEFSTTQPEQMQVTSGSFEVLLPGESQWQTFAEGSTFNLDADVSFSIRATDVAEYLCSYL.

Belongs to the nucleoside phosphorylase PpnP family.

It catalyses the reaction a purine D-ribonucleoside + phosphate = a purine nucleobase + alpha-D-ribose 1-phosphate. The catalysed reaction is adenosine + phosphate = alpha-D-ribose 1-phosphate + adenine. The enzyme catalyses cytidine + phosphate = cytosine + alpha-D-ribose 1-phosphate. It carries out the reaction guanosine + phosphate = alpha-D-ribose 1-phosphate + guanine. It catalyses the reaction inosine + phosphate = alpha-D-ribose 1-phosphate + hypoxanthine. The catalysed reaction is thymidine + phosphate = 2-deoxy-alpha-D-ribose 1-phosphate + thymine. The enzyme catalyses uridine + phosphate = alpha-D-ribose 1-phosphate + uracil. It carries out the reaction xanthosine + phosphate = alpha-D-ribose 1-phosphate + xanthine. In terms of biological role, catalyzes the phosphorolysis of diverse nucleosides, yielding D-ribose 1-phosphate and the respective free bases. Can use uridine, adenosine, guanosine, cytidine, thymidine, inosine and xanthosine as substrates. Also catalyzes the reverse reactions. The polypeptide is Pyrimidine/purine nucleoside phosphorylase (Shewanella amazonensis (strain ATCC BAA-1098 / SB2B)).